The following is an 856-amino-acid chain: MNIPDKPSLEGLEEKWSKLWKSSKIYNFELEQVSAKQDVYSIDTPPPTASGVLHIGHVFSYTHTDIIARFQRMQGKIVFYPMGWDDNGLPTERRVQNYFSVRCDPSLPYCQNLKLAQINNDSMARSISRRNFIELCQQLSEEDERKFEELWNYLGLSVDWSQTYRTIDDDAIHLSQHFFLENVNSGAAYQDWAPTLWDVTYRTAVAQAEIEERQITGFYYRLAFENENATVEIETTRPELLAGCVALVAHPDDNRYKHLFGSHVITPVFDVKVPVLPHRAAQPDKGSGIAMVCTFGDITDVQWWRDLNLQSCPIIDASGRVVPDAPDPIVSERGRRAFATLSGKTLSAAKKHTLEMLISEKSIIGEPRKITHPVKFFEKGDKPLEILLTRQWYIRNGYSDNALTERLIELGKQLQWYPKTMLRRYEDWLTGLNSDWLISRQRFLGVPFPIWYQTDDRGNAKFDDPIFPDRKDLPLDPTIAVPRGYSENQRGAPNGFVAETDVMDTWATSSLTPQLAGKYLKNPKLFEAIFPYSLRPQGQDIIRTWLFSSIIRSEYAHATAPWKSTAISGFILDPDRKKMSKSKGNAKTPKDILDRYGADAVRYWAACARLGVDTALDVENPTQIKIGRRLALKVLNAARFVVHLHKNKETYSGQPDMKRCYPIDFAAISNPLDLSLLKQLDQTIEQSTNALKNFDHSKALDTTETFFWNFCDNYVEIVKDRAYAGDESALTTLLVVTNIVIKLLAPFIPYATEEAWSWFNETSVHTQSWPETLKLHSGDIELLKIACSFMSLVRGGKTEAKLSQKTEIAYLKIALPNPEIIMPIMDDLRRAGKIDKCELIDGDAQILAIEYGEISR.

Positions 47–57 (PTASGVLHIGH) match the 'HIGH' region motif. Residues 578–582 (KMSKS) carry the 'KMSKS' region motif. Residue K581 participates in ATP binding.

Belongs to the class-I aminoacyl-tRNA synthetase family. ValS type 2 subfamily. Monomer.

It localises to the cytoplasm. The catalysed reaction is tRNA(Val) + L-valine + ATP = L-valyl-tRNA(Val) + AMP + diphosphate. In terms of biological role, catalyzes the attachment of valine to tRNA(Val). As ValRS can inadvertently accommodate and process structurally similar amino acids such as threonine, to avoid such errors, it has a 'posttransfer' editing activity that hydrolyzes mischarged Thr-tRNA(Val) in a tRNA-dependent manner. The sequence is that of Valine--tRNA ligase from Tropheryma whipplei (strain TW08/27) (Whipple's bacillus).